The chain runs to 179 residues: Natural killer cells antigen CD94 (179 aa).

At 1-10 the chain is on the cytoplasmic side; the sequence is MAVSQTTLWN. A helical; Signal-anchor for type II membrane protein membrane pass occupies residues 11–31; that stretch reads LISGILGVICLLLMTTMGILL. Residues 32–179 are Extracellular-facing; the sequence is KNLLLTESIQ…SRFICKQELM (148 aa). Intrachain disulfides connect Cys-58–Cys-70, Cys-61–Cys-72, Cys-89–Cys-174, and Cys-152–Cys-166. A C-type lectin domain is found at 68-175; the sequence is HQCNCYLFFD…CEDKSRFICK (108 aa). Residues Asn-93 and Asn-125 are each glycosylated (N-linked (GlcNAc...) asparagine).

As to quaternary structure, can form disulfide-bonded heterodimer with NKG2 family members KLRC1 and KLRC2. KLRD1-KLRC1 heterodimer interacts with peptide-bound MHC-E-B2M heterotrimeric complex. KLRD1 plays a prominent role in directly interacting with MHC-E. KLRD1-KLRC1 interacts with much higher affinity with peptide-bound MHC-E-B2M than KLRD1-KLRC2. Interacts with the adapter protein TYROBP/DAP12; this interaction is required for cell surface expression and cell activation.

It is found in the cell membrane. In terms of biological role, immune receptor involved in self-nonself discrimination. In complex with KLRC1 or KLRC2 on cytotoxic and regulatory lymphocyte subsets, recognizes non-classical major histocompatibility (MHC) class Ib molecule MHC-E loaded with self-peptides derived from the signal sequence of classical MHC class Ia and non-classical MHC class Ib molecules. Enables cytotoxic cells to monitor the expression of MHC class I molecules in healthy cells and to tolerate self. Primarily functions as a ligand binding subunit as it lacks the capacity to signal. Functionally, KLRD1-KLRC1 acts as an immune inhibitory receptor. Key inhibitory receptor on natural killer (NK) cells that regulates their activation and effector functions. Dominantly counteracts T cell receptor signaling on a subset of memory/effector CD8-positive T cells as part of an antigen-driven response to avoid autoimmunity. On intraepithelial CD8-positive gamma-delta regulatory T cells triggers TGFB1 secretion, which in turn limits the cytotoxic programming of intraepithelial CD8-positive alpha-beta T cells, distinguishing harmless from pathogenic antigens. In MHC-E-rich tumor microenvironment, acts as an immune inhibitory checkpoint and may contribute to progressive loss of effector functions of NK cells and tumor-specific T cells, a state known as cell exhaustion. Upon MHC-E-peptide binding, transmits intracellular signals through KLRC1 immunoreceptor tyrosine-based inhibition motifs (ITIMs) by recruiting INPP5D/SHIP-1 and INPPL1/SHIP-2 tyrosine phosphatases to ITIMs, and ultimately opposing signals transmitted by activating receptors through dephosphorylation of proximal signaling molecules. KLRD1-KLRC2 acts as an immune activating receptor. On cytotoxic lymphocyte subsets recognizes MHC-E loaded with signal sequence-derived peptides from non-classical MHC class Ib MHC-G molecules, likely playing a role in the generation and effector functions of adaptive NK cells and in maternal-fetal tolerance during pregnancy. Regulates the effector functions of terminally differentiated cytotoxic lymphocyte subsets, and in particular may play a role in adaptive NK cell response to viral infection. Upon MHC-E-peptide binding, transmits intracellular signals via the adapter protein TYROBP/DAP12, triggering the phosphorylation of proximal signaling molecules and cell activation. The protein is Natural killer cells antigen CD94 (KLRD1) of Canis lupus familiaris (Dog).